The primary structure comprises 385 residues: Methionyl-tRNA formyltransferase, mitochondrial (385 aa).

Belongs to the Fmt family.

It localises to the mitochondrion. The catalysed reaction is L-methionyl-tRNA(fMet) + (6R)-10-formyltetrahydrofolate = N-formyl-L-methionyl-tRNA(fMet) + (6S)-5,6,7,8-tetrahydrofolate + H(+). Functionally, methionyl-tRNA formyltransferase that formylates methionyl-tRNA in mitochondria and is crucial for translation initiation. This Rattus norvegicus (Rat) protein is Methionyl-tRNA formyltransferase, mitochondrial (Mtfmt).